Here is a 305-residue protein sequence, read N- to C-terminus: Translation initiation factor eIF2B subunit alpha (305 aa).

The residue at position 35 (lysine 35) is an N6-acetyllysine.

It belongs to the eIF-2B alpha/beta/delta subunits family. Component of the translation initiation factor 2B (eIF2B) complex which is a heterodecamer of two sets of five different subunits: alpha, beta, gamma, delta and epsilon. Subunits alpha, beta and delta comprise a regulatory subcomplex and subunits epsilon and gamma comprise a catalytic subcomplex. Within the complex, the hexameric regulatory complex resides at the center, with the two heterodimeric catalytic subcomplexes bound on opposite sides.

It localises to the cytoplasm. The protein localises to the cytosol. With respect to regulation, activated by the chemical integrated stress response (ISR) inhibitor ISRIB which stimulates guanine nucleotide exchange factor activity for both phosphorylated and unphosphorylated eIF2. Functionally, acts as a component of the translation initiation factor 2B (eIF2B) complex, which catalyzes the exchange of GDP for GTP on eukaryotic initiation factor 2 (eIF2) gamma subunit. Its guanine nucleotide exchange factor activity is repressed when bound to eIF2 complex phosphorylated on the alpha subunit, thereby limiting the amount of methionyl-initiator methionine tRNA available to the ribosome and consequently global translation is repressed. This Pongo abelii (Sumatran orangutan) protein is Translation initiation factor eIF2B subunit alpha (EIF2B1).